The following is a 128-amino-acid chain: Fluoride-specific ion channel FluC (128 aa).

4 helical membrane-spanning segments follow: residues 5–25, 35–55, 67–87, and 96–116; these read IVAI…LSIG, LGTL…VVAF, LFVI…SVEV, and FGWA…LTGL. Gly-75 and Thr-78 together coordinate Na(+).

It belongs to the fluoride channel Fluc/FEX (TC 1.A.43) family.

It localises to the cell inner membrane. The enzyme catalyses fluoride(in) = fluoride(out). Its activity is regulated as follows. Na(+) is not transported, but it plays an essential structural role and its presence is essential for fluoride channel function. Functionally, fluoride-specific ion channel. Important for reducing fluoride concentration in the cell, thus reducing its toxicity. The polypeptide is Fluoride-specific ion channel FluC (Burkholderia thailandensis (strain ATCC 700388 / DSM 13276 / CCUG 48851 / CIP 106301 / E264)).